We begin with the raw amino-acid sequence, 28 residues long: Apolipoprotein C-I (28 aa).

It belongs to the apolipoprotein C1 family.

The protein localises to the secreted. Inhibitor of lipoprotein binding to the low density lipoprotein (LDL) receptor, LDL receptor-related protein, and very low density lipoprotein (VLDL) receptor. Associates with high density lipoproteins (HDL) and the triacylglycerol-rich lipoproteins in the plasma and makes up about 10% of the protein of the VLDL and 2% of that of HDL. Appears to interfere directly with fatty acid uptake and is also the major plasma inhibitor of cholesteryl ester transfer protein (CETP). Binds free fatty acids and reduces their intracellular esterification. Modulates the interaction of APOE with beta-migrating VLDL and inhibits binding of beta-VLDL to the LDL receptor-related protein. The sequence is that of Apolipoprotein C-I (APOC1) from Oryctolagus cuniculus (Rabbit).